We begin with the raw amino-acid sequence, 286 residues long: Shikimate dehydrogenase (NADP(+)) (286 aa).

Shikimate contacts are provided by residues 19-21 and threonine 66; that span reads SVS. Lysine 70 (proton acceptor) is an active-site residue. Residues asparagine 91 and aspartate 106 each contribute to the shikimate site. NADP(+)-binding positions include 130–134 and alanine 225; that span reads GAGGS. Tyrosine 227 lines the shikimate pocket. Glycine 248 contacts NADP(+).

It belongs to the shikimate dehydrogenase family. In terms of assembly, homodimer.

It carries out the reaction shikimate + NADP(+) = 3-dehydroshikimate + NADPH + H(+). It functions in the pathway metabolic intermediate biosynthesis; chorismate biosynthesis; chorismate from D-erythrose 4-phosphate and phosphoenolpyruvate: step 4/7. Involved in the biosynthesis of the chorismate, which leads to the biosynthesis of aromatic amino acids. Catalyzes the reversible NADPH linked reduction of 3-dehydroshikimate (DHSA) to yield shikimate (SA). This Dehalococcoides mccartyi (strain ATCC BAA-2100 / JCM 16839 / KCTC 5957 / BAV1) protein is Shikimate dehydrogenase (NADP(+)).